Consider the following 158-residue polypeptide: Small ribosomal subunit protein uS7 (158 aa).

Belongs to the universal ribosomal protein uS7 family. In terms of assembly, part of the 30S ribosomal subunit. Contacts proteins S9 and S11.

Functionally, one of the primary rRNA binding proteins, it binds directly to 16S rRNA where it nucleates assembly of the head domain of the 30S subunit. Is located at the subunit interface close to the decoding center, probably blocks exit of the E-site tRNA. In Flavobacterium johnsoniae (strain ATCC 17061 / DSM 2064 / JCM 8514 / BCRC 14874 / CCUG 350202 / NBRC 14942 / NCIMB 11054 / UW101) (Cytophaga johnsonae), this protein is Small ribosomal subunit protein uS7.